Reading from the N-terminus, the 327-residue chain is GMP reductase (327 aa).

The active-site Thioimidate intermediate is the Cys176. 205–228 (IIADGGIRTHGDIAKSIRFGASMV) is a binding site for NADP(+).

The protein belongs to the IMPDH/GMPR family. GuaC type 2 subfamily.

The catalysed reaction is IMP + NH4(+) + NADP(+) = GMP + NADPH + 2 H(+). Functionally, catalyzes the irreversible NADPH-dependent deamination of GMP to IMP. It functions in the conversion of nucleobase, nucleoside and nucleotide derivatives of G to A nucleotides, and in maintaining the intracellular balance of A and G nucleotides. This Streptococcus pyogenes serotype M28 (strain MGAS6180) protein is GMP reductase.